The chain runs to 244 residues: Coenzyme Q-binding protein COQ10 homolog B, mitochondrial (244 aa).

Belongs to the COQ10 family. In terms of assembly, interacts with coenzyme Q.

It localises to the mitochondrion inner membrane. Functionally, required for the function of coenzyme Q in the respiratory chain. May serve as a chaperone or may be involved in the transport of Q6 from its site of synthesis to the catalytic sites of the respiratory complexes. This Xenopus laevis (African clawed frog) protein is Coenzyme Q-binding protein COQ10 homolog B, mitochondrial (coq10b).